A 595-amino-acid chain; its full sequence is Arginine--tRNA ligase (595 aa).

The 'HIGH' region motif lies at 132 to 142 (ANPTGPLHVGH).

The protein belongs to the class-I aminoacyl-tRNA synthetase family. In terms of assembly, monomer.

Its subcellular location is the cytoplasm. It carries out the reaction tRNA(Arg) + L-arginine + ATP = L-arginyl-tRNA(Arg) + AMP + diphosphate. The protein is Arginine--tRNA ligase of Cupriavidus necator (strain ATCC 17699 / DSM 428 / KCTC 22496 / NCIMB 10442 / H16 / Stanier 337) (Ralstonia eutropha).